Here is a 426-residue protein sequence, read N- to C-terminus: Phosphomethylpyrimidine synthase (426 aa).

Residues asparagine 65, methionine 94, tyrosine 123, histidine 162, 184-186 (SRG), 225-228 (DGMR), and glutamate 264 each bind substrate. Histidine 268 provides a ligand contact to Zn(2+). A substrate-binding site is contributed by tyrosine 291. Histidine 332 is a binding site for Zn(2+). [4Fe-4S] cluster is bound by residues cysteine 408, cysteine 411, and cysteine 415.

The protein belongs to the ThiC family. [4Fe-4S] cluster is required as a cofactor.

It catalyses the reaction 5-amino-1-(5-phospho-beta-D-ribosyl)imidazole + S-adenosyl-L-methionine = 4-amino-2-methyl-5-(phosphooxymethyl)pyrimidine + CO + 5'-deoxyadenosine + formate + L-methionine + 3 H(+). Its pathway is cofactor biosynthesis; thiamine diphosphate biosynthesis. Its function is as follows. Catalyzes the synthesis of the hydroxymethylpyrimidine phosphate (HMP-P) moiety of thiamine from aminoimidazole ribotide (AIR) in a radical S-adenosyl-L-methionine (SAM)-dependent reaction. The chain is Phosphomethylpyrimidine synthase from Methanococcus vannielii (strain ATCC 35089 / DSM 1224 / JCM 13029 / OCM 148 / SB).